Reading from the N-terminus, the 98-residue chain is ESAT-6-like protein EsxK (98 aa).

It belongs to the WXG100 family. CFP-10 subfamily. In terms of assembly, strongly interacts with EsxL to form a heterodimeric complex under reducing conditions. The complex is regulated by the redox state of EsxL.

The protein resides in the secreted. In Mycobacterium tuberculosis (strain ATCC 25618 / H37Rv), this protein is ESAT-6-like protein EsxK.